The chain runs to 224 residues: 7-cyano-7-deazaguanine synthase 1 (224 aa).

Residue 10–20 (LSGGLDSMVCA) participates in ATP binding. The Zn(2+) site is built by cysteine 189, cysteine 199, cysteine 202, and cysteine 205.

This sequence belongs to the QueC family. Requires Zn(2+) as cofactor.

It catalyses the reaction 7-carboxy-7-deazaguanine + NH4(+) + ATP = 7-cyano-7-deazaguanine + ADP + phosphate + H2O + H(+). It participates in purine metabolism; 7-cyano-7-deazaguanine biosynthesis. Its function is as follows. Catalyzes the ATP-dependent conversion of 7-carboxy-7-deazaguanine (CDG) to 7-cyano-7-deazaguanine (preQ(0)). The chain is 7-cyano-7-deazaguanine synthase 1 from Sphingopyxis alaskensis (strain DSM 13593 / LMG 18877 / RB2256) (Sphingomonas alaskensis).